The following is a 110-amino-acid chain: U1-lycotoxin-Ls1gg (110 aa).

Residues 1–20 (MKFVLLFGVLLVTLFSYSSA) form the signal peptide. Residues 21–44 (EMLDDFDQADEDELLSLIEKEEAR) constitute a propeptide that is removed on maturation. 3 cysteine pairs are disulfide-bonded: C54/C71, C61/C89, and C73/C87.

Belongs to the neurotoxin 19 (CSTX) family. 03 subfamily. As to expression, expressed by the venom gland.

The protein resides in the secreted. In Lycosa singoriensis (Wolf spider), this protein is U1-lycotoxin-Ls1gg.